We begin with the raw amino-acid sequence, 261 residues long: Syntaxin-7 (261 aa).

N-acetylserine is present on Ser-2. Residues 2 to 238 (SYTPGVGGDP…DYQRKSRKTL (237 aa)) are Cytoplasmic-facing. Thr-4 is subject to Phosphothreonine. Ser-45 carries the post-translational modification Phosphoserine. A coiled-coil region spans residues 47-69 (ELRQQLQQKQQYTNQLAKETDKY). Ser-75 carries the phosphoserine modification. The residue at position 79 (Thr-79) is a Phosphothreonine. Phosphoserine is present on residues Ser-125, Ser-126, Ser-129, and Ser-205. The interval 129–148 (SGSFPEDSSKERNLVSWESQ) is disordered. The 63-residue stretch at 165–227 (LRLIHERESS…QQANQQLSRA (63 aa)) folds into the t-SNARE coiled-coil homology domain. A helical; Anchor for type IV membrane protein membrane pass occupies residues 239–259 (CIIILILVIGVAIISLIIWGL). Residues 260–261 (NH) lie on the Vesicular side of the membrane.

This sequence belongs to the syntaxin family. As to quaternary structure, forms a SNARE complex with VTI1B, STX8 and VAMP8 which functions in the homotypic fusion of late endosomes. Component of the SNARE complex composed of STX7, STX8, VAMP7 and VTI1B that is required for heterotypic fusion of late endosomes with lysosomes. Interacts with VPS11, VPS16 and VPS18. Interacts with VPS33A. Interacts with TPC1. In terms of tissue distribution, highest expression is found in placenta followed by heart, skeletal muscle, kidney and brain. Low expression is found in pancreas, lung and liver.

The protein localises to the early endosome membrane. Functionally, may be involved in protein trafficking from the plasma membrane to the early endosome (EE) as well as in homotypic fusion of endocytic organelles. Mediates the endocytic trafficking from early endosomes to late endosomes and lysosomes. The protein is Syntaxin-7 (STX7) of Homo sapiens (Human).